The following is a 73-amino-acid chain: RNA-binding protein Hfq (73 aa).

Residues 8-68 (DQFLNQIRKE…ISTFAPQKNV (61 aa)) form the Sm domain.

The protein belongs to the Hfq family. In terms of assembly, homohexamer.

Functionally, RNA chaperone that binds small regulatory RNA (sRNAs) and mRNAs to facilitate mRNA translational regulation in response to envelope stress, environmental stress and changes in metabolite concentrations. Also binds with high specificity to tRNAs. The protein is RNA-binding protein Hfq of Bacillus licheniformis (strain ATCC 14580 / DSM 13 / JCM 2505 / CCUG 7422 / NBRC 12200 / NCIMB 9375 / NCTC 10341 / NRRL NRS-1264 / Gibson 46).